The sequence spans 315 residues: ATP synthase gamma chain (315 aa).

This sequence belongs to the ATPase gamma chain family. F-type ATPases have 2 components, CF(1) - the catalytic core - and CF(0) - the membrane proton channel. CF(1) has five subunits: alpha(3), beta(3), gamma(1), delta(1), epsilon(1). CF(0) has three main subunits: a, b and c.

Its subcellular location is the cellular thylakoid membrane. Produces ATP from ADP in the presence of a proton gradient across the membrane. The gamma chain is believed to be important in regulating ATPase activity and the flow of protons through the CF(0) complex. This Microcystis aeruginosa (strain NIES-843 / IAM M-2473) protein is ATP synthase gamma chain.